Consider the following 244-residue polypeptide: Mitochondrial import inner membrane translocase subunit Tim21 (244 aa).

The N-terminal 18 residues, 1 to 18 (MICAFLRVVQHAEKLHGS), are a transit peptide targeting the mitochondrion. A disordered region spans residues 65-96 (TQGPDPRKAKEDSTKQVSIRRNQREETGVSMS). Over residues 69–78 (DPRKAKEDST) the composition is skewed to basic and acidic residues. The chain crosses the membrane as a helical span at residues 107-127 (SYLIVVLFGVGLTGGLLYAIF).

It belongs to the TIM21 family. Component of the TIM23 complex. Component of the MITRAC (mitochondrial translation regulation assembly intermediate of cytochrome c oxidase complex) complex, the core components of this complex being COA3/MITRAC12 and COX14. Interacts with COA3 and MT-CO1/COX1.

The protein localises to the mitochondrion membrane. In terms of biological role, participates in the translocation of transit peptide-containing proteins across the mitochondrial inner membrane. Also required for assembly of mitochondrial respiratory chain complex I and complex IV as component of the MITRAC (mitochondrial translation regulation assembly intermediate of cytochrome c oxidase complex) complex. Probably shuttles between the presequence translocase and respiratory-chain assembly intermediates in a process that promotes incorporation of early nuclear-encoded subunits into these complexes. This chain is Mitochondrial import inner membrane translocase subunit Tim21 (Timm21), found in Mus musculus (Mouse).